A 298-amino-acid chain; its full sequence is Iron-regulated virulence regulatory protein IrgB (298 aa).

An HTH lysR-type domain is found at 1–59 (MQDLSAVKAFHALCQHKSLTAAAKALEQPKSTLSRRLAQLEEDLGQSLLMRQGNRLTLT). The H-T-H motif DNA-binding region spans 19 to 38 (LTAAAKALEQPKSTLSRRLA).

It belongs to the LysR transcriptional regulatory family.

In terms of biological role, transcription activation of the irgA gene. In the presence of sufficient iron, transcription of both irgA and irgB is negatively regulated by a fur-like protein. In low iron conditions, negative regulation of transcription is removed, and production of IrgB leads to positive transcriptional activation of irgA. The protein is Iron-regulated virulence regulatory protein IrgB (irgB) of Vibrio cholerae serotype O1 (strain ATCC 39541 / Classical Ogawa 395 / O395).